The sequence spans 255 residues: tRNA pseudouridine synthase A (255 aa).

Catalysis depends on aspartate 52, which acts as the Nucleophile. A substrate-binding site is contributed by tyrosine 111.

Belongs to the tRNA pseudouridine synthase TruA family. In terms of assembly, homodimer.

The enzyme catalyses uridine(38/39/40) in tRNA = pseudouridine(38/39/40) in tRNA. Functionally, formation of pseudouridine at positions 38, 39 and 40 in the anticodon stem and loop of transfer RNAs. The chain is tRNA pseudouridine synthase A from Cereibacter sphaeroides (strain KD131 / KCTC 12085) (Rhodobacter sphaeroides).